We begin with the raw amino-acid sequence, 370 residues long: 3-isopropylmalate dehydrogenase 1 (370 aa).

Substrate contacts are provided by arginine 98, arginine 108, arginine 136, and aspartate 227. Positions 227, 251, and 255 each coordinate Mg(2+). Residue 289–301 coordinates NAD(+); the sequence is GSAPDIAGQGIAN.

This sequence belongs to the isocitrate and isopropylmalate dehydrogenases family. LeuB type 1 subfamily. Homodimer. Requires Mg(2+) as cofactor. Mn(2+) is required as a cofactor.

The protein resides in the cytoplasm. It carries out the reaction (2R,3S)-3-isopropylmalate + NAD(+) = 4-methyl-2-oxopentanoate + CO2 + NADH. The protein operates within amino-acid biosynthesis; L-leucine biosynthesis; L-leucine from 3-methyl-2-oxobutanoate: step 3/4. In terms of biological role, catalyzes the oxidation of 3-carboxy-2-hydroxy-4-methylpentanoate (3-isopropylmalate) to 3-carboxy-4-methyl-2-oxopentanoate. The product decarboxylates to 4-methyl-2 oxopentanoate. In Bordetella bronchiseptica (strain ATCC BAA-588 / NCTC 13252 / RB50) (Alcaligenes bronchisepticus), this protein is 3-isopropylmalate dehydrogenase 1.